Here is a 426-residue protein sequence, read N- to C-terminus: Histidine--tRNA ligase (426 aa).

Belongs to the class-II aminoacyl-tRNA synthetase family.

The protein resides in the cytoplasm. It carries out the reaction tRNA(His) + L-histidine + ATP = L-histidyl-tRNA(His) + AMP + diphosphate + H(+). The chain is Histidine--tRNA ligase from Saccharolobus islandicus (strain Y.N.15.51 / Yellowstone #2) (Sulfolobus islandicus).